A 159-amino-acid polypeptide reads, in one-letter code: Transcriptional repressor NrdR (159 aa).

The segment at 3–34 is a zinc-finger region; sequence CPFCHTPDTSVIDSRVSEEGDRIRRRRRCPHC. Residues 49-139 form the ATP-cone domain; the sequence is PQVVKQDGNR…VYRSFQGAAD (91 aa).

Belongs to the NrdR family. Zn(2+) is required as a cofactor.

Functionally, negatively regulates transcription of bacterial ribonucleotide reductase nrd genes and operons by binding to NrdR-boxes. This Nitrosospira multiformis (strain ATCC 25196 / NCIMB 11849 / C 71) protein is Transcriptional repressor NrdR.